The chain runs to 217 residues: Protein LURP-one-related 2 (217 aa).

This sequence belongs to the LOR family.

Functionally, might be related to the phospholipid scramblase and tubby-like superfamily of membrane tethered transcription factors. The sequence is that of Protein LURP-one-related 2 from Arabidopsis thaliana (Mouse-ear cress).